Here is a 105-residue protein sequence, read N- to C-terminus: Thioredoxin (105 aa).

The Thioredoxin domain occupies 2–105 (VKQIESKYAF…KLEATINELI (104 aa)). Lys3 is modified (N6-acetyllysine). Residue Lys8 is modified to N6-succinyllysine. Active-site nucleophile residues include Cys32 and Cys35. Cys32 and Cys35 are joined by a disulfide. N6-acetyllysine is present on Lys39. Residues Cys62 and Cys69 each carry the S-nitrosocysteine modification. Cys73 carries the S-nitrosocysteine; alternate modification. Lys94 carries the N6-acetyllysine; alternate modification. Position 94 is an N6-succinyllysine; alternate (Lys94).

Belongs to the thioredoxin family. Homodimer; disulfide-linked. Interacts with TXNIP through the redox-active site. Interacts with MAP3K5 and CASP3. Interacts with APEX1; the interaction stimulates the FOS/JUN AP-1 DNA-binding activity in a redox-dependent manner. In the fully reduced protein, both Cys-69 and Cys-73 are nitrosylated in response to nitric oxide (NO). When two disulfide bonds are present in the protein, only Cys-73 is nitrosylated. Cys-73 can serve as donor for nitrosylation of target proteins. As to expression, erythrocytes.

It is found in the nucleus. The protein resides in the cytoplasm. The protein localises to the secreted. In terms of biological role, participates in various redox reactions through the reversible oxidation of its active center dithiol to a disulfide and catalyzes dithiol-disulfide exchange reactions. Plays a role in the reversible S-nitrosylation of cysteine residues in target proteins, and thereby contributes to the response to intracellular nitric oxide. Nitrosylates the active site Cys of CASP3 in response to nitric oxide (NO), and thereby inhibits caspase-3 activity. Induces the FOS/JUN AP-1 DNA binding activity in ionizing radiation (IR) cells through its oxidation/reduction status and stimulates AP-1 transcriptional activity. The chain is Thioredoxin (TXN) from Sus scrofa (Pig).